We begin with the raw amino-acid sequence, 106 residues long: Small ribosomal subunit protein uS17 (106 aa).

The protein belongs to the universal ribosomal protein uS17 family. As to quaternary structure, part of the 30S ribosomal subunit.

One of the primary rRNA binding proteins, it binds specifically to the 5'-end of 16S ribosomal RNA. This is Small ribosomal subunit protein uS17 from Methanosphaera stadtmanae (strain ATCC 43021 / DSM 3091 / JCM 11832 / MCB-3).